Here is a 157-residue protein sequence, read N- to C-terminus: SsrA-binding protein (157 aa).

The protein belongs to the SmpB family.

The protein resides in the cytoplasm. Functionally, required for rescue of stalled ribosomes mediated by trans-translation. Binds to transfer-messenger RNA (tmRNA), required for stable association of tmRNA with ribosomes. tmRNA and SmpB together mimic tRNA shape, replacing the anticodon stem-loop with SmpB. tmRNA is encoded by the ssrA gene; the 2 termini fold to resemble tRNA(Ala) and it encodes a 'tag peptide', a short internal open reading frame. During trans-translation Ala-aminoacylated tmRNA acts like a tRNA, entering the A-site of stalled ribosomes, displacing the stalled mRNA. The ribosome then switches to translate the ORF on the tmRNA; the nascent peptide is terminated with the 'tag peptide' encoded by the tmRNA and targeted for degradation. The ribosome is freed to recommence translation, which seems to be the essential function of trans-translation. The chain is SsrA-binding protein from Chromohalobacter salexigens (strain ATCC BAA-138 / DSM 3043 / CIP 106854 / NCIMB 13768 / 1H11).